Reading from the N-terminus, the 349-residue chain is Selenide, water dikinase (349 aa).

Residue C17 is part of the active site. ATP contacts are provided by residues K20 and 48–50 (YFD). Residue D51 participates in Mg(2+) binding. ATP-binding positions include D68, D91, and 139–141 (GHS). Residue D91 coordinates Mg(2+). D229 lines the Mg(2+) pocket.

It belongs to the selenophosphate synthase 1 family. Class I subfamily. Homodimer. Requires Mg(2+) as cofactor.

It catalyses the reaction hydrogenselenide + ATP + H2O = selenophosphate + AMP + phosphate + 2 H(+). Its function is as follows. Synthesizes selenophosphate from selenide and ATP. The sequence is that of Selenide, water dikinase from Nitrosomonas eutropha (strain DSM 101675 / C91 / Nm57).